Consider the following 357-residue polypeptide: UDP-N-acetylglucosamine--N-acetylmuramyl-(pentapeptide) pyrophosphoryl-undecaprenol N-acetylglucosamine transferase (357 aa).

Residues 13–15 (SAG), Arg166, Ser196, and Gln291 contribute to the UDP-N-acetyl-alpha-D-glucosamine site.

It belongs to the glycosyltransferase 28 family. MurG subfamily.

The protein localises to the cell membrane. The catalysed reaction is di-trans,octa-cis-undecaprenyl diphospho-N-acetyl-alpha-D-muramoyl-L-alanyl-D-glutamyl-meso-2,6-diaminopimeloyl-D-alanyl-D-alanine + UDP-N-acetyl-alpha-D-glucosamine = di-trans,octa-cis-undecaprenyl diphospho-[N-acetyl-alpha-D-glucosaminyl-(1-&gt;4)]-N-acetyl-alpha-D-muramoyl-L-alanyl-D-glutamyl-meso-2,6-diaminopimeloyl-D-alanyl-D-alanine + UDP + H(+). It functions in the pathway cell wall biogenesis; peptidoglycan biosynthesis. Cell wall formation. Catalyzes the transfer of a GlcNAc subunit on undecaprenyl-pyrophosphoryl-MurNAc-pentapeptide (lipid intermediate I) to form undecaprenyl-pyrophosphoryl-MurNAc-(pentapeptide)GlcNAc (lipid intermediate II). The sequence is that of UDP-N-acetylglucosamine--N-acetylmuramyl-(pentapeptide) pyrophosphoryl-undecaprenol N-acetylglucosamine transferase from Clostridium perfringens (strain SM101 / Type A).